The primary structure comprises 524 residues: D-3-phosphoglycerate dehydrogenase (524 aa).

NAD(+) contacts are provided by residues 149 to 150 (RI), Asp-169, 229 to 231 (CAR), and Asp-255. Residue Arg-231 is part of the active site. The active site involves Glu-260. The active-site Proton donor is His-278. 278-281 (HQGA) serves as a coordination point for NAD(+). In terms of domain architecture, ACT spans 452–524 (LAIIKHIDRP…NIKDVAVINL (73 aa)).

This sequence belongs to the D-isomer specific 2-hydroxyacid dehydrogenase family.

It catalyses the reaction (2R)-3-phosphoglycerate + NAD(+) = 3-phosphooxypyruvate + NADH + H(+). The protein operates within amino-acid biosynthesis; L-serine biosynthesis; L-serine from 3-phospho-D-glycerate: step 1/3. The protein is D-3-phosphoglycerate dehydrogenase (serA) of Methanocaldococcus jannaschii (strain ATCC 43067 / DSM 2661 / JAL-1 / JCM 10045 / NBRC 100440) (Methanococcus jannaschii).